The chain runs to 520 residues: GMP synthase [glutamine-hydrolyzing] (520 aa).

The Glutamine amidotransferase type-1 domain maps to 12-205 (KIIVLDYGSQ…AISICGARGD (194 aa)). Cys-89 (nucleophile) is an active-site residue. Catalysis depends on residues His-179 and Glu-181. The 190-residue stretch at 206 to 395 (WSMDNFIDME…LGMPEEIVWR (190 aa)) folds into the GMPS ATP-PPase domain. 233 to 239 (SGGVDSS) serves as a coordination point for ATP.

In terms of assembly, homodimer.

It carries out the reaction XMP + L-glutamine + ATP + H2O = GMP + L-glutamate + AMP + diphosphate + 2 H(+). The protein operates within purine metabolism; GMP biosynthesis; GMP from XMP (L-Gln route): step 1/1. Its function is as follows. Catalyzes the synthesis of GMP from XMP. This Streptococcus pyogenes serotype M3 (strain SSI-1) protein is GMP synthase [glutamine-hydrolyzing].